A 252-amino-acid polypeptide reads, in one-letter code: Transcription factor bHLH117 (252 aa).

The segment at 103-141 is disordered; it reads LFPSLSPPLPAAKRQKLNSTSSSTTSGSPTASNDGGIIT. Residues 121-134 are compositionally biased toward low complexity; it reads STSSSTTSGSPTAS. A bHLH domain is found at 130-179; sequence SPTASNDGGIITKRRKISDKIRSLEKLMPWERKMNLAMTLEESHKYIKFL.

As to quaternary structure, homodimer.

The protein localises to the nucleus. In Arabidopsis thaliana (Mouse-ear cress), this protein is Transcription factor bHLH117 (BHLH117).